Consider the following 765-residue polypeptide: Endosialin (765 aa).

An N-terminal signal peptide occupies residues 1-17; it reads MLLRLLLAWVAAVPALG. The Extracellular segment spans residues 18–695; it reads QVPWTPEPRA…GQSQRDDRWL (678 aa). Positions 30–156 constitute a C-type lectin domain; that stretch reads GPSSCYALFP…CTLAVDGYLC (127 aa). Cystine bridges form between Cys-131/Cys-147, Cys-164/Cys-213, Cys-203/Cys-230, Cys-316/Cys-326, Cys-322/Cys-335, and Cys-337/Cys-350. In terms of domain architecture, Sushi spans 162 to 232; sequence GACPALPLEV…WSQTGPLCPG (71 aa). The 40-residue stretch at 312–351 folds into the EGF-like; calcium-binding domain; the sequence is DTDECQIAGVCQQMCVNYVGGFECYCSEGHELEADGISCS. 6 O-linked (GalNAc...) threonine glycosylation sites follow: Thr-401, Thr-428, Thr-448, Thr-456, Thr-459, and Thr-466. 2 O-linked (GalNAc...) serine glycosylation sites follow: Ser-467 and Ser-470. Residue Thr-472 is glycosylated (O-linked (GalNAc...) threonine). Residue Ser-477 is glycosylated (O-linked (GalNAc...) serine). O-linked (GalNAc...) threonine glycans are attached at residues Thr-488, Thr-517, Thr-520, Thr-535, Thr-552, Thr-554, Thr-556, Thr-570, Thr-571, Thr-604, and Thr-613. The disordered stretch occupies residues 548-675; that stretch reads MSPDTHTITY…QLPSVPSTAA (128 aa). A compositionally biased stretch (pro residues) spans 622-633; sequence PAFPSSPLPPQR. Ser-626 and Ser-627 each carry an O-linked (GalNAc...) serine glycan. 2 O-linked (GalNAc...) threonine glycosylation sites follow: Thr-635 and Thr-638. Over residues 635–647 the composition is skewed to polar residues; it reads TNQTSSISPTHSY. O-linked (GalNAc...) serine glycosylation is found at Ser-639 and Ser-640. Residue Thr-644 is glycosylated (O-linked (GalNAc...) threonine). The O-linked (GalNAc...) serine glycan is linked to Ser-663. Residue Thr-673 is glycosylated (O-linked (GalNAc...) threonine). The helical transmembrane segment at 696-716 threads the bilayer; it reads LVALLVPTCVFLVVLLALGIV. At 717-765 the chain is on the cytoplasmic side; it reads YCTRCGSHAPNKRITDCYRWVTHAGNKSSTEPMPPRGSLTGVQTCRTSV. Ser-754 is subject to Phosphoserine.

As to quaternary structure, interacts with PDGFRA; this interaction promotes PDGF receptor signaling pathway. Interacts with integrin beta-1/ITGB1. Interacts with insulin receptor/INSR; this interaction diminishes INSR autophosphorylation. In terms of processing, O-glycosylated by sialylated oligosaccharides. May be N-glycosylated. In terms of tissue distribution, expressed in cell lines derived from endothelial cells, embryonic fibroblasts and preadipocytes. Expressed in skeletal muscle by a subset of pericytes.

It is found in the membrane. Functionally, cell surface glycoprotein involved in various biological processes including angiogenesis, immune response modulation, and tissue remodeling and repair. Participates in pericyte proliferation through positive modulation of the PDGF receptor signaling pathway. Acts as a scaffold for factor X, triggering allosteric changes and the spatial re-alignment of factor X with the TF-factor VIIa complex, thereby enhancing coagulation activation. Modulates the insulin signaling pathway by interacting with insulin receptor/INSR and by diminishing its capacity to be autophosphorylated in response to insulin. Also regulates LPS-induced inflammatory responses in macrophages by favoring production of proinflammatory cytokines. The protein is Endosialin (Cd248) of Mus musculus (Mouse).